The following is a 216-amino-acid chain: UPF0598 protein C8orf82 (216 aa).

This sequence belongs to the UPF0598 family.

This Homo sapiens (Human) protein is UPF0598 protein C8orf82 (C8orf82).